Reading from the N-terminus, the 351-residue chain is Peptide chain release factor 1 (351 aa).

At Q233 the chain carries N5-methylglutamine.

Belongs to the prokaryotic/mitochondrial release factor family. Methylated by PrmC. Methylation increases the termination efficiency of RF1.

It is found in the cytoplasm. In terms of biological role, peptide chain release factor 1 directs the termination of translation in response to the peptide chain termination codons UAG and UAA. The sequence is that of Peptide chain release factor 1 (prfA) from Treponema pallidum (strain Nichols).